Reading from the N-terminus, the 116-residue chain is uncharacterized protein (116 aa).

It belongs to the mimivirus L15/L51/R83 family.

This is an uncharacterized protein from Acanthamoeba polyphaga mimivirus (APMV).